A 206-amino-acid chain; its full sequence is Ras-related protein Rab-18 (206 aa).

GTP-binding residues include S17, G20, K21, S22, S23, D34, P35, T40, G66, K123, D125, and A152. S22 is a binding site for Mg(2+). Short sequence motifs (switch) lie at residues 31–45 (DTFD…GVDF) and 63–80 (DTAG…YYRG). T40 provides a ligand contact to Mg(2+). C199 carries S-palmitoyl cysteine lipidation. Residue C203 is modified to Cysteine methyl ester. Residue C203 is the site of S-geranylgeranyl cysteine attachment. A propeptide spans 204 to 206 (SML) (removed in mature form).

The protein belongs to the small GTPase superfamily. Rab family. Mg(2+) is required as a cofactor.

It is found in the endoplasmic reticulum membrane. Its subcellular location is the golgi apparatus. The protein localises to the cis-Golgi network membrane. The protein resides in the lipid droplet. It localises to the apical cell membrane. It catalyses the reaction GTP + H2O = GDP + phosphate + H(+). With respect to regulation, regulated by guanine nucleotide exchange factors (GEFs) which promote the exchange of bound GDP for free GTP. Regulated by GTPase activating proteins (GAPs) which increase the GTP hydrolysis activity at the ER membrane. Inhibited by GDP dissociation inhibitors (GDIs) which prevent Rab-GDP dissociation. In terms of biological role, the small GTPases Rab are key regulators of intracellular membrane trafficking, from the formation of transport vesicles to their fusion with membranes. Rabs cycle between an inactive GDP-bound form and an active GTP-bound form that is able to recruit to membranes different sets of downstream effectors directly responsible for vesicle formation, movement, tethering and fusion. RAB18 is required for the localization of ZFYVE1 to lipid droplets and for its function in mediating the formation of endoplasmic reticulum-lipid droplets (ER-LD) contacts. Also required for maintaining endoplasmic reticulum structure. Plays a role in apical endocytosis/recycling. Plays a key role in eye and brain development and neurodegeneration. In Gallus gallus (Chicken), this protein is Ras-related protein Rab-18 (RAB18).